A 352-amino-acid polypeptide reads, in one-letter code: Pollen-specific protein SF21 (352 aa).

It belongs to the NDRG family. Pollen.

In Helianthus annuus (Common sunflower), this protein is Pollen-specific protein SF21 (SF21).